Here is a 294-residue protein sequence, read N- to C-terminus: Ribosomal RNA small subunit methyltransferase H (294 aa).

S-adenosyl-L-methionine contacts are provided by residues 31-33 (GGY), Asp-49, Phe-76, Asp-97, and Gln-104.

This sequence belongs to the methyltransferase superfamily. RsmH family.

Its subcellular location is the cytoplasm. It catalyses the reaction cytidine(1402) in 16S rRNA + S-adenosyl-L-methionine = N(4)-methylcytidine(1402) in 16S rRNA + S-adenosyl-L-homocysteine + H(+). Functionally, specifically methylates the N4 position of cytidine in position 1402 (C1402) of 16S rRNA. The chain is Ribosomal RNA small subunit methyltransferase H from Wolbachia pipientis subsp. Culex pipiens (strain wPip).